Consider the following 428-residue polypeptide: Chaperone SurA (428 aa).

Residues 1–20 (MKNWKTLLLGIAMIANTSFA) form the signal peptide. 2 consecutive PpiC domains span residues 171–272 (STEL…KVND) and 282–382 (VTEV…ELLD).

The protein resides in the periplasm. It carries out the reaction [protein]-peptidylproline (omega=180) = [protein]-peptidylproline (omega=0). Chaperone involved in the correct folding and assembly of outer membrane proteins. Recognizes specific patterns of aromatic residues and the orientation of their side chains, which are found more frequently in integral outer membrane proteins. May act in both early periplasmic and late outer membrane-associated steps of protein maturation. This Salmonella paratyphi A (strain ATCC 9150 / SARB42) protein is Chaperone SurA.